The following is a 3075-amino-acid chain: Laminin subunit alpha-1 (3075 aa).

A signal peptide spans 1-17 (MRGGVLLVLLLCVAAQC). Residues 18–269 (RQRGLFPAIL…SIKDISVGGM (252 aa)) form the Laminin N-terminal domain. Cystine bridges form between Cys-270–Cys-279, Cys-272–Cys-290, Cys-292–Cys-301, Cys-304–Cys-324, Cys-327–Cys-336, Cys-329–Cys-361, Cys-364–Cys-373, Cys-376–Cys-394, Cys-397–Cys-409, Cys-399–Cys-427, Cys-429–Cys-438, Cys-441–Cys-451, Cys-454–Cys-467, Cys-456–Cys-471, Cys-473–Cys-482, and Cys-485–Cys-500. Laminin EGF-like domains lie at 270 to 326 (CICY…TCEA), 327 to 396 (CNCH…PCRP), 397 to 453 (CNCD…TCVS), and 454 to 502 (CGCN…GCSE). Residues 503-512 (CFCFGVSDVC) enclose the Laminin EGF-like 5; first part domain. Residues 516–708 (SWPVGQVNSM…DLVVAADVEH (193 aa)) enclose the Laminin IV type A 1 domain. Asn-665 is a glycosylation site (N-linked (GlcNAc...) asparagine). Residues 709–741 (CECPQGYTGTSCESCLSGYYRVDGILFGGICQP) enclose the Laminin EGF-like 5; second part domain. 32 cysteine pairs are disulfide-bonded: Cys-742/Cys-751, Cys-744/Cys-757, Cys-760/Cys-769, Cys-772/Cys-788, Cys-791/Cys-806, Cys-793/Cys-816, Cys-819/Cys-828, Cys-831/Cys-846, Cys-849/Cys-863, Cys-851/Cys-870, Cys-873/Cys-882, Cys-885/Cys-899, Cys-902/Cys-914, Cys-904/Cys-921, Cys-923/Cys-932, Cys-935/Cys-948, Cys-951/Cys-963, Cys-953/Cys-969, Cys-971/Cys-980, Cys-983/Cys-995, Cys-998/Cys-1007, Cys-1000/Cys-1014, Cys-1016/Cys-1025, Cys-1028/Cys-1041, Cys-1044/Cys-1056, Cys-1046/Cys-1063, Cys-1065/Cys-1074, Cys-1077/Cys-1087, Cys-1090/Cys-1102, Cys-1092/Cys-1118, Cys-1120/Cys-1129, and Cys-1132/Cys-1147. Laminin EGF-like domains are found at residues 742–790 (CECH…DCQP), 791–848 (CACP…SCVP), 849–901 (CDCS…NCRA), 902–950 (CECH…GCRP), 951–997 (CNCS…SCTP), 998–1043 (CDCP…GCQA), 1044–1089 (CNCS…DCVP), and 1090–1149 (CDCD…GCSP). The Laminin EGF-like 14; first part domain occupies 1150–1159 (CFCSGLSHLC). The region spanning 1170–1361 (VTLGSDQPLL…EEEVASLLEN (192 aa)) is the Laminin IV type A 2 domain. A Laminin EGF-like 14; second part domain is found at 1362 to 1402 (CVCPPGTVGFSCQDCAPGYHRGKLPAGSDRGPRPLVAPCVP). 12 cysteine pairs are disulfide-bonded: Cys-1403-Cys-1412, Cys-1405-Cys-1419, Cys-1422-Cys-1431, Cys-1434-Cys-1449, Cys-1452-Cys-1466, Cys-1454-Cys-1476, Cys-1479-Cys-1488, Cys-1491-Cys-1506, Cys-1509-Cys-1521, Cys-1511-Cys-1528, Cys-1530-Cys-1539, and Cys-1542-Cys-1553. Laminin EGF-like domains lie at 1403–1451 (CSCN…DCAL), 1452–1508 (CACP…SCQK), and 1509–1555 (CDCN…DCVS). Residues 1556-2116 (CDDECVGVLL…SQARKQAASI (561 aa)) are domain II and I. 5 N-linked (GlcNAc...) asparagine glycosylation sites follow: Asn-1579, Asn-1689, Asn-1717, Asn-2047, and Asn-2243. The stretch at 1706–1783 (MQIRDFTQLH…KMQESNHLLL (78 aa)) forms a coiled coil. 5 consecutive Laminin G-like domains span residues 2117 to 2297 (KVAV…CRGC), 2305 to 2481 (DPSF…RKGC), 2486 to 2673 (IRSV…LDTC), 2713 to 2885 (AHQF…VNRC), and 2890 to 3070 (QEGT…LHSC). 2 disulfides stabilise this stretch: Cys-2271–Cys-2297 and Cys-2457–Cys-2481. A Cell attachment site motif is present at residues 2534 to 2536 (RGD). 3 cysteine pairs are disulfide-bonded: Cys-2646-Cys-2673, Cys-2860-Cys-2885, and Cys-3039-Cys-3070.

In terms of assembly, laminin is a complex glycoprotein, consisting of three different polypeptide chains (alpha, beta, gamma), which are bound to each other by disulfide bonds into a cross-shaped molecule comprising one long and three short arms with globules at each end. Alpha-1 is a subunit of laminin-1 (laminin-111 or EHS laminin) and laminin-3 (laminin-121 or S-laminin). Tyrosine phosphorylated by PKDCC/VLK.

It localises to the secreted. It is found in the extracellular space. Its subcellular location is the extracellular matrix. The protein localises to the basement membrane. Functionally, binding to cells via a high affinity receptor, laminin is thought to mediate the attachment, migration and organization of cells into tissues during embryonic development by interacting with other extracellular matrix components. In Homo sapiens (Human), this protein is Laminin subunit alpha-1 (LAMA1).